The primary structure comprises 670 residues: DNA mismatch repair protein MutL (670 aa).

Residues 363 to 451 form a disordered region; sequence SFDRGRPLSR…RAAGGPASTH (89 aa). A compositionally biased stretch (basic and acidic residues) spans 379–389; that stretch reads ERWRERHRPDA.

The protein belongs to the DNA mismatch repair MutL/HexB family.

Functionally, this protein is involved in the repair of mismatches in DNA. It is required for dam-dependent methyl-directed DNA mismatch repair. May act as a 'molecular matchmaker', a protein that promotes the formation of a stable complex between two or more DNA-binding proteins in an ATP-dependent manner without itself being part of a final effector complex. The chain is DNA mismatch repair protein MutL from Syntrophobacter fumaroxidans (strain DSM 10017 / MPOB).